The chain runs to 270 residues: 2-C-methyl-D-erythritol 4-phosphate cytidylyltransferase (270 aa).

The disordered stretch occupies residues 1-33 (MSDESRPSPAETPATTFAETSAETSAAGRSPAR). A compositionally biased stretch (low complexity) spans 7–27 (PSPAETPATTFAETSAETSAA).

It belongs to the IspD/TarI cytidylyltransferase family. IspD subfamily.

It catalyses the reaction 2-C-methyl-D-erythritol 4-phosphate + CTP + H(+) = 4-CDP-2-C-methyl-D-erythritol + diphosphate. It participates in isoprenoid biosynthesis; isopentenyl diphosphate biosynthesis via DXP pathway; isopentenyl diphosphate from 1-deoxy-D-xylulose 5-phosphate: step 2/6. Catalyzes the formation of 4-diphosphocytidyl-2-C-methyl-D-erythritol from CTP and 2-C-methyl-D-erythritol 4-phosphate (MEP). The polypeptide is 2-C-methyl-D-erythritol 4-phosphate cytidylyltransferase (Streptomyces coelicolor (strain ATCC BAA-471 / A3(2) / M145)).